The following is a 310-amino-acid chain: tRNA uridine(34) hydroxylase (310 aa).

Residues 124–218 enclose the Rhodanese domain; the sequence is SDPEVLLIDT…YFEEVPQEES (95 aa). Residue Cys178 is the Cysteine persulfide intermediate of the active site.

Belongs to the TrhO family.

The catalysed reaction is uridine(34) in tRNA + AH2 + O2 = 5-hydroxyuridine(34) in tRNA + A + H2O. Catalyzes oxygen-dependent 5-hydroxyuridine (ho5U) modification at position 34 in tRNAs. The sequence is that of tRNA uridine(34) hydroxylase from Pseudomonas putida (strain W619).